The primary structure comprises 176 residues: ATP-dependent protease subunit HslV (176 aa).

Thr5 is a catalytic residue. Na(+)-binding residues include Ser161, Cys164, and Thr167.

Belongs to the peptidase T1B family. HslV subfamily. A double ring-shaped homohexamer of HslV is capped on each side by a ring-shaped HslU homohexamer. The assembly of the HslU/HslV complex is dependent on binding of ATP.

It localises to the cytoplasm. It catalyses the reaction ATP-dependent cleavage of peptide bonds with broad specificity.. Its activity is regulated as follows. Allosterically activated by HslU binding. In terms of biological role, protease subunit of a proteasome-like degradation complex believed to be a general protein degrading machinery. This is ATP-dependent protease subunit HslV from Desulfitobacterium hafniense (strain Y51).